The chain runs to 229 residues: Ribonuclease 3 (229 aa).

The RNase III domain occupies 5–127 (LARLERKLGY…LIGAIYLDAD (123 aa)). Position 40 (glutamate 40) interacts with Mg(2+). Aspartate 44 is an active-site residue. Mg(2+)-binding residues include aspartate 113 and glutamate 116. Glutamate 116 is an active-site residue. A DRBM domain is found at 154 to 224 (DPKTRLQEFL…AAAALIALGV (71 aa)).

Belongs to the ribonuclease III family. As to quaternary structure, homodimer. The cofactor is Mg(2+).

Its subcellular location is the cytoplasm. The catalysed reaction is Endonucleolytic cleavage to 5'-phosphomonoester.. In terms of biological role, digests double-stranded RNA. Involved in the processing of primary rRNA transcript to yield the immediate precursors to the large and small rRNAs (23S and 16S). Processes some mRNAs, and tRNAs when they are encoded in the rRNA operon. Processes pre-crRNA and tracrRNA of type II CRISPR loci if present in the organism. The chain is Ribonuclease 3 from Pseudomonas putida (strain W619).